The chain runs to 88 residues: Small ribosomal subunit protein uS15c (88 aa).

This sequence belongs to the universal ribosomal protein uS15 family. As to quaternary structure, part of the 30S ribosomal subunit.

The protein localises to the plastid. It is found in the chloroplast. The protein is Small ribosomal subunit protein uS15c (rps15) of Lobularia maritima (Sweet alyssum).